Reading from the N-terminus, the 512-residue chain is Choline-sulfatase (512 aa).

Asp-14, Gln-15, and Cys-54 together coordinate Ca(2+). The active-site Nucleophile is the Cys-54. Cys-54 is modified (3-oxoalanine (Cys)). Residue His-104 is part of the active site. Positions 296 and 297 each coordinate Ca(2+).

This sequence belongs to the sulfatase family. Ca(2+) is required as a cofactor. Post-translationally, the conversion to 3-oxoalanine (also known as C-formylglycine, FGly), of a serine or cysteine residue in prokaryotes and of a cysteine residue in eukaryotes, is critical for catalytic activity.

It catalyses the reaction choline sulfate + H2O = choline + sulfate + H(+). It functions in the pathway amine and polyamine biosynthesis; choline biosynthesis; choline from choline sulfate: step 1/1. In terms of biological role, converts choline-O-sulfate into choline. The chain is Choline-sulfatase (betC) from Rhizobium meliloti (strain 1021) (Ensifer meliloti).